The following is a 303-amino-acid chain: Ribosomal RNA small subunit methyltransferase H (303 aa).

S-adenosyl-L-methionine contacts are provided by residues 36-38 (CGH), Asp55, Phe81, Asp101, and Gln108.

It belongs to the methyltransferase superfamily. RsmH family.

The protein localises to the cytoplasm. It catalyses the reaction cytidine(1402) in 16S rRNA + S-adenosyl-L-methionine = N(4)-methylcytidine(1402) in 16S rRNA + S-adenosyl-L-homocysteine + H(+). In terms of biological role, specifically methylates the N4 position of cytidine in position 1402 (C1402) of 16S rRNA. The polypeptide is Ribosomal RNA small subunit methyltransferase H (Aster yellows witches'-broom phytoplasma (strain AYWB)).